We begin with the raw amino-acid sequence, 329 residues long: IDS-like terpene synthase 1 (329 aa).

Mg(2+) is bound by residues D79 and D83.

Belongs to the FPP/GGPP synthase family. It depends on Mg(2+) as a cofactor.

It catalyses the reaction (2E)-geranyl diphosphate + H2O = linalool + diphosphate. The enzyme catalyses (2E,6E)-farnesyl diphosphate + H2O = (6E)-nerolidol + diphosphate. Its function is as follows. Terpene synthase that shows monoterpene synthase activity and produces linalool, using geranyl diphosphate (GPP) as substrate. Also shows sesquiterpene synthase activity as it is able to convert farnesyl diphosphate (FPP) into (E)-nerolidol. The protein is IDS-like terpene synthase 1 of Melampsora lini (Rust fungus).